We begin with the raw amino-acid sequence, 417 residues long: Serine hydroxymethyltransferase 2 (417 aa).

(6S)-5,6,7,8-tetrahydrofolate-binding positions include Leu121 and 125–127; that span reads GHL. Lys230 carries the N6-(pyridoxal phosphate)lysine modification. (6S)-5,6,7,8-tetrahydrofolate is bound at residue 355 to 357; it reads SPF.

Belongs to the SHMT family. Homodimer. Pyridoxal 5'-phosphate is required as a cofactor.

The protein resides in the cytoplasm. The enzyme catalyses (6R)-5,10-methylene-5,6,7,8-tetrahydrofolate + glycine + H2O = (6S)-5,6,7,8-tetrahydrofolate + L-serine. It functions in the pathway one-carbon metabolism; tetrahydrofolate interconversion. The protein operates within amino-acid biosynthesis; glycine biosynthesis; glycine from L-serine: step 1/1. Its function is as follows. Catalyzes the reversible interconversion of serine and glycine with tetrahydrofolate (THF) serving as the one-carbon carrier. This reaction serves as the major source of one-carbon groups required for the biosynthesis of purines, thymidylate, methionine, and other important biomolecules. Also exhibits THF-independent aldolase activity toward beta-hydroxyamino acids, producing glycine and aldehydes, via a retro-aldol mechanism. This Colwellia psychrerythraea (strain 34H / ATCC BAA-681) (Vibrio psychroerythus) protein is Serine hydroxymethyltransferase 2.